A 31-amino-acid polypeptide reads, in one-letter code: Cytochrome b6-f complex subunit 6 (31 aa).

A helical membrane pass occupies residues 4–26 (LTSYFGFLLAALTITSALFIGLS).

The protein belongs to the PetL family. The 4 large subunits of the cytochrome b6-f complex are cytochrome b6, subunit IV (17 kDa polypeptide, PetD), cytochrome f and the Rieske protein, while the 4 small subunits are PetG, PetL, PetM and PetN. The complex functions as a dimer.

The protein localises to the plastid. It localises to the chloroplast thylakoid membrane. Component of the cytochrome b6-f complex, which mediates electron transfer between photosystem II (PSII) and photosystem I (PSI), cyclic electron flow around PSI, and state transitions. PetL is important for photoautotrophic growth as well as for electron transfer efficiency and stability of the cytochrome b6-f complex. The chain is Cytochrome b6-f complex subunit 6 from Aethionema grandiflorum (Persian stone-cress).